A 372-amino-acid chain; its full sequence is Putative F-box/kelch-repeat protein At3g22730 (372 aa).

The F-box domain occupies 1-50 (MMMSDLSLDLVEEILSRVPATSLKRLRSTCKLWNALFKNPGFTKKQFLKA). 3 Kelch repeats span residues 155 to 204 (ILRC…SFKG), 245 to 293 (ALSV…PIRG), and 324 to 372 (KVYI…IIKE).

The polypeptide is Putative F-box/kelch-repeat protein At3g22730 (Arabidopsis thaliana (Mouse-ear cress)).